The primary structure comprises 197 residues: Imidazoleglycerol-phosphate dehydratase (197 aa).

It belongs to the imidazoleglycerol-phosphate dehydratase family.

It localises to the cytoplasm. The catalysed reaction is D-erythro-1-(imidazol-4-yl)glycerol 3-phosphate = 3-(imidazol-4-yl)-2-oxopropyl phosphate + H2O. It functions in the pathway amino-acid biosynthesis; L-histidine biosynthesis; L-histidine from 5-phospho-alpha-D-ribose 1-diphosphate: step 6/9. The sequence is that of Imidazoleglycerol-phosphate dehydratase from Leptospira biflexa serovar Patoc (strain Patoc 1 / Ames).